The primary structure comprises 219 residues: Octanoyltransferase (219 aa).

One can recognise a BPL/LPL catalytic domain in the interval 32–207 (SSSPDQLWIV…TFSHNLGYQN (176 aa)). Substrate-binding positions include 71 to 78 (RGGQVTYH), 138 to 140 (SLG), and 151 to 153 (GLA). The active-site Acyl-thioester intermediate is the C169.

The protein belongs to the LipB family.

It localises to the cytoplasm. The catalysed reaction is octanoyl-[ACP] + L-lysyl-[protein] = N(6)-octanoyl-L-lysyl-[protein] + holo-[ACP] + H(+). The protein operates within protein modification; protein lipoylation via endogenous pathway; protein N(6)-(lipoyl)lysine from octanoyl-[acyl-carrier-protein]: step 1/2. In terms of biological role, catalyzes the transfer of endogenously produced octanoic acid from octanoyl-acyl-carrier-protein onto the lipoyl domains of lipoate-dependent enzymes. Lipoyl-ACP can also act as a substrate although octanoyl-ACP is likely to be the physiological substrate. This Shewanella woodyi (strain ATCC 51908 / MS32) protein is Octanoyltransferase.